The sequence spans 209 residues: Ribosomal RNA large subunit methyltransferase E (209 aa).

5 residues coordinate S-adenosyl-L-methionine: Gly-60, Trp-62, Asp-80, Asp-96, and Asp-121. Lys-161 functions as the Proton acceptor in the catalytic mechanism.

The protein belongs to the class I-like SAM-binding methyltransferase superfamily. RNA methyltransferase RlmE family.

It is found in the cytoplasm. It carries out the reaction uridine(2552) in 23S rRNA + S-adenosyl-L-methionine = 2'-O-methyluridine(2552) in 23S rRNA + S-adenosyl-L-homocysteine + H(+). Functionally, specifically methylates the uridine in position 2552 of 23S rRNA at the 2'-O position of the ribose in the fully assembled 50S ribosomal subunit. The chain is Ribosomal RNA large subunit methyltransferase E from Pseudomonas fluorescens (strain Pf0-1).